The primary structure comprises 106 residues: UPF0213 protein KPN78578_35340 (106 aa).

The GIY-YIG domain occupies 13–88; it reads VCWFLYLIRT…KQLTKREKER (76 aa).

It belongs to the UPF0213 family.

The sequence is that of UPF0213 protein KPN78578_35340 from Klebsiella pneumoniae subsp. pneumoniae (strain ATCC 700721 / MGH 78578).